Reading from the N-terminus, the 361-residue chain is Cyclin-dependent kinase 10 (361 aa).

One can recognise a Protein kinase domain in the interval 37–321 (FEKLNRIGEG…AGDCLESSYF (285 aa)). Residues 43 to 51 (IGEGTYGIV) and K66 each bind ATP. D161 serves as the catalytic Proton acceptor. T194 carries the phosphothreonine modification. The segment at 332 to 361 (LMPTFPHHRNKRATPATSLGTESQSRRGRP) is disordered.

Belongs to the protein kinase superfamily. CMGC Ser/Thr protein kinase family. CDC2/CDKX subfamily. In terms of assembly, heterodimer with CCNQ, the interaction is required for kinase activity. Interacts with ETS2. Interacts with PRK2.

The protein resides in the cytoplasm. It localises to the cytoskeleton. Its subcellular location is the cilium basal body. The catalysed reaction is L-seryl-[protein] + ATP = O-phospho-L-seryl-[protein] + ADP + H(+). The enzyme catalyses L-threonyl-[protein] + ATP = O-phospho-L-threonyl-[protein] + ADP + H(+). Functionally, cyclin-dependent kinase that phosphorylates the transcription factor ETS2 (in vitro) and positively controls its proteasomal degradation (in cells). Involved in the regulation of actin cytoskeleton organization through the phosphorylation of actin dynamics regulators such as PKN2. Is a negative regulator of ciliogenesis through phosphorylation of PKN2 and promotion of RhoA signaling. In Bos taurus (Bovine), this protein is Cyclin-dependent kinase 10 (CDK10).